A 366-amino-acid polypeptide reads, in one-letter code: Cobalt-precorrin-5B C(1)-methyltransferase (366 aa).

The protein belongs to the CbiD family.

The enzyme catalyses Co-precorrin-5B + S-adenosyl-L-methionine = Co-precorrin-6A + S-adenosyl-L-homocysteine. Its pathway is cofactor biosynthesis; adenosylcobalamin biosynthesis; cob(II)yrinate a,c-diamide from sirohydrochlorin (anaerobic route): step 6/10. Catalyzes the methylation of C-1 in cobalt-precorrin-5B to form cobalt-precorrin-6A. This is Cobalt-precorrin-5B C(1)-methyltransferase from Pseudomonas paraeruginosa (strain DSM 24068 / PA7) (Pseudomonas aeruginosa (strain PA7)).